A 690-amino-acid polypeptide reads, in one-letter code: Quinohemoprotein alcohol dehydrogenase ADH IIB (690 aa).

The first 22 residues, methionine 1–alanine 22, serve as a signal peptide directing secretion. Position 81 (glutamate 81) interacts with pyrroloquinoline quinone. An intrachain disulfide couples cysteine 127 to cysteine 128. Pyrroloquinoline quinone contacts are provided by residues arginine 133, threonine 177, and glycine 193–alanine 194. Residue glutamate 195 participates in Ca(2+) binding. Threonine 252 contacts pyrroloquinoline quinone. Residues asparagine 272 and aspartate 317 each coordinate Ca(2+). Aspartate 317 serves as the catalytic Proton acceptor. Pyrroloquinoline quinone contacts are provided by residues lysine 344, asparagine 404–tryptophan 405, and valine 547. A Cytochrome c domain is found at glutamate 600–glutamate 678. Positions 613, 616, 617, and 655 each coordinate heme c.

Belongs to the bacterial PQQ dehydrogenase family. Monomer. Requires pyrroloquinoline quinone as cofactor. It depends on Ca(2+) as a cofactor. Heme c serves as cofactor.

The protein localises to the periplasm. The enzyme catalyses 2 oxidized [azurin] + a primary alcohol = 2 reduced [azurin] + an aldehyde + 2 H(+). Inhibited by 10 mM 1-butanol. Its function is as follows. Catalyzes the dye-linked oxidation of primary alcohols to the corresponding aldehydes and the (subsequent) oxidation of the aldehydes to carboxylic acids. Exhibits activity with longer mono-alcohols (C-4 to C-7) but not with methanol or glycerol. Reacts with 1,2-propanediol and 1,3-propanediol but not with sugar alcohols such as D-sorbitol. The chain is Quinohemoprotein alcohol dehydrogenase ADH IIB from Pseudomonas putida (Arthrobacter siderocapsulatus).